A 250-amino-acid chain; its full sequence is Triosephosphate isomerase (250 aa).

9–11 (NWK) contacts substrate. Histidine 95 serves as the catalytic Electrophile. Catalysis depends on glutamate 167, which acts as the Proton acceptor. Substrate contacts are provided by residues glycine 173, serine 213, and 234-235 (GG).

The protein belongs to the triosephosphate isomerase family. Homodimer.

Its subcellular location is the cytoplasm. It carries out the reaction D-glyceraldehyde 3-phosphate = dihydroxyacetone phosphate. The protein operates within carbohydrate biosynthesis; gluconeogenesis. Its pathway is carbohydrate degradation; glycolysis; D-glyceraldehyde 3-phosphate from glycerone phosphate: step 1/1. Involved in the gluconeogenesis. Catalyzes stereospecifically the conversion of dihydroxyacetone phosphate (DHAP) to D-glyceraldehyde-3-phosphate (G3P). In Flavobacterium psychrophilum (strain ATCC 49511 / DSM 21280 / CIP 103535 / JIP02/86), this protein is Triosephosphate isomerase.